Consider the following 296-residue polypeptide: Telomere repeat-binding factor 4 (296 aa).

The HTH myb-type domain maps to Met1–Ile62. Residues Trp28–Val58 constitute a DNA-binding region (H-T-H motif). The H15 domain maps to Asn126–Asp200. A disordered region spans residues Lys197 to Ser232. Over residues Lys219 to Ser232 the composition is skewed to polar residues. Positions Lys245 to Glu282 form a coiled coil.

It belongs to the histone H1/H5 family. SMH subfamily.

Its subcellular location is the nucleus. It is found in the chromosome. Its function is as follows. Binds preferentially double-stranded telomeric repeats. This Arabidopsis thaliana (Mouse-ear cress) protein is Telomere repeat-binding factor 4.